The primary structure comprises 504 residues: Histidine ammonia-lyase (504 aa).

The 5-imidazolinone (Ala-Gly) cross-link spans 142 to 144; the sequence is ASG. A 2,3-didehydroalanine (Ser) modification is found at Ser143.

It belongs to the PAL/histidase family. Contains an active site 4-methylidene-imidazol-5-one (MIO), which is formed autocatalytically by cyclization and dehydration of residues Ala-Ser-Gly.

It is found in the cytoplasm. It catalyses the reaction L-histidine = trans-urocanate + NH4(+). It participates in amino-acid degradation; L-histidine degradation into L-glutamate; N-formimidoyl-L-glutamate from L-histidine: step 1/3. The sequence is that of Histidine ammonia-lyase from Staphylococcus aureus (strain USA300).